Reading from the N-terminus, the 524-residue chain is Ribonuclease Y (524 aa).

A helical membrane pass occupies residues 3-23; that stretch reads IVINLFLLVPASIVFFAAGFF. The segment at 96–127 is disordered; sequence QQREGQLKKQAQDNRDMERRLQDQRKENEQVQ. The span at 100-124 shows a compositional bias: basic and acidic residues; sequence GQLKKQAQDNRDMERRLQDQRKENE. One can recognise a KH domain in the interval 214 to 280; that stretch reads ALSVVHIQTD…KLTLQKLLSE (67 aa). Positions 340–432 constitute an HD domain; that stretch reads LLQHSREVAM…VDAANVISLS (93 aa).

Belongs to the RNase Y family.

The protein localises to the cell membrane. Its function is as follows. Endoribonuclease that initiates mRNA decay. This is Ribonuclease Y from Chlorobium phaeovibrioides (strain DSM 265 / 1930) (Prosthecochloris vibrioformis (strain DSM 265)).